The chain runs to 100 residues: Large ribosomal subunit protein eL21 (100 aa).

Belongs to the eukaryotic ribosomal protein eL21 family.

This Pyrobaculum arsenaticum (strain DSM 13514 / JCM 11321 / PZ6) protein is Large ribosomal subunit protein eL21.